A 92-amino-acid polypeptide reads, in one-letter code: Small ribosomal subunit protein uS19c (92 aa).

This sequence belongs to the universal ribosomal protein uS19 family.

The protein localises to the plastid. The protein resides in the chloroplast. In terms of biological role, protein S19 forms a complex with S13 that binds strongly to the 16S ribosomal RNA. The sequence is that of Small ribosomal subunit protein uS19c from Psilotum nudum (Whisk fern).